The chain runs to 435 residues: Mitochondrial distribution and morphology protein 12 (435 aa).

The SMP-LTD domain maps to 1–435 (MSIEVDWGAA…VYPSFWTFLV (435 aa)). Disordered stretches follow at residues 73–113 (DEDD…AINH) and 186–268 (WNDS…TSEE). Basic and acidic residues predominate over residues 96-113 (THPELNESSFRDDNAINH). Residues 218-238 (SSNPTSRPSTSSTLPSHPSGS) are compositionally biased toward low complexity. Residues 251–268 (HGSHPEEHGHLDDPTSEE) show a composition bias toward basic and acidic residues.

Belongs to the MDM12 family. Component of the ER-mitochondria encounter structure (ERMES) or MDM complex, composed of mmm1, mdm10, mdm12 and mdm34. A mmm1 homodimer associates with one molecule of mdm12 on each side in a pairwise head-to-tail manner, and the SMP-LTD domains of mmm1 and mdm12 generate a continuous hydrophobic tunnel for phospholipid trafficking.

It localises to the mitochondrion outer membrane. The protein localises to the endoplasmic reticulum membrane. Component of the ERMES/MDM complex, which serves as a molecular tether to connect the endoplasmic reticulum (ER) and mitochondria. Components of this complex are involved in the control of mitochondrial shape and protein biogenesis, and function in nonvesicular lipid trafficking between the ER and mitochondria. Mdm12 is required for the interaction of the ER-resident membrane protein mmm1 and the outer mitochondrial membrane-resident beta-barrel protein mdm10. The mdm12-mmm1 subcomplex functions in the major beta-barrel assembly pathway that is responsible for biogenesis of all mitochondrial outer membrane beta-barrel proteins, and acts in a late step after the SAM complex. The mdm10-mdm12-mmm1 subcomplex further acts in the TOM40-specific pathway after the action of the mdm12-mmm1 complex. Essential for establishing and maintaining the structure of mitochondria and maintenance of mtDNA nucleoids. This is Mitochondrial distribution and morphology protein 12 from Aspergillus niger (strain ATCC MYA-4892 / CBS 513.88 / FGSC A1513).